The primary structure comprises 936 residues: E3 ubiquitin-protein ligase ZNRF3 (936 aa).

Residues 1–31 (MRPRSGGRPGATGRRRRRLRRRPRGLRCSRL) are disordered. The signal sequence occupies residues 1–55 (MRPRSGGRPGATGRRRRRLRRRPRGLRCSRLPPPPPLPLLLGLLLAAAGPGAARA). The span at 13-27 (GRRRRRLRRRPRGLR) shows a compositional bias: basic residues. Residues 56-219 (KETAFVEVVL…PRQPTEYFDM (164 aa)) are Extracellular-facing. A helical transmembrane segment spans residues 220–240 (GIFLAFFVVVSLVCLILLVKI). Residues 241–936 (KLKQRRSQNS…HSADSSSPGA (696 aa)) are Cytoplasmic-facing. An RING-type; atypical zinc finger spans residues 293 to 334 (CAICLEKYIDGEELRVIPCTHRFHRKCVDPWLLQHHTCPHCR). Disordered regions lie at residues 608 to 693 (SEAG…SPGA), 739 to 758 (LYEGSGPAGGEPQSGSSQGL), 849 to 875 (THSLGSWGGTRGPDTPRPHRGLGATRE), and 892 to 936 (CPPE…SPGA). Polar residues predominate over residues 654-684 (SGDQVSTCSLEMNYSSNSSLEHRGPNSSTSE). Positions 913–922 (ESSTTATEAA) are enriched in low complexity.

The protein belongs to the ZNRF3 family. In terms of assembly, interacts with LRP6, FZD4, FZD5, FZD6 and FZD8. Interacts with RSPO1; interaction promotes indirect interaction with LGR4 and membrane clearance of ZNRF3. Also interacts with RSPO2. Interacts with LMBR1L.

It is found in the cell membrane. It catalyses the reaction S-ubiquitinyl-[E2 ubiquitin-conjugating enzyme]-L-cysteine + [acceptor protein]-L-lysine = [E2 ubiquitin-conjugating enzyme]-L-cysteine + N(6)-ubiquitinyl-[acceptor protein]-L-lysine.. The protein operates within protein modification; protein ubiquitination. Negatively regulated by R-spondin proteins such as RSPO1: interaction with RSPO1 induces the indirect association between ZNRF3 and LGR4, promoting membrane clearance of ZNRF3. In terms of biological role, E3 ubiquitin-protein ligase that acts as a negative regulator of the Wnt signaling pathway by mediating the ubiquitination and subsequent degradation of Wnt receptor complex components Frizzled and LRP6. Acts on both canonical and non-canonical Wnt signaling pathway. Acts as a tumor suppressor in the intestinal stem cell zone by inhibiting the Wnt signaling pathway, thereby restricting the size of the intestinal stem cell zone. Along with RSPO2 and RNF43, constitutes a master switch that governs limb specification. The protein is E3 ubiquitin-protein ligase ZNRF3 (ZNRF3) of Homo sapiens (Human).